A 1061-amino-acid chain; its full sequence is Error-prone DNA polymerase (1061 aa).

Belongs to the DNA polymerase type-C family. DnaE2 subfamily.

Its subcellular location is the cytoplasm. It catalyses the reaction DNA(n) + a 2'-deoxyribonucleoside 5'-triphosphate = DNA(n+1) + diphosphate. DNA polymerase involved in damage-induced mutagenesis and translesion synthesis (TLS). It is not the major replicative DNA polymerase. This Bdellovibrio bacteriovorus (strain ATCC 15356 / DSM 50701 / NCIMB 9529 / HD100) protein is Error-prone DNA polymerase.